Reading from the N-terminus, the 425-residue chain is Kynurenine/alpha-aminoadipate aminotransferase, mitochondrial (425 aa).

The N-terminal 29 residues, 1–29, are a transit peptide targeting the mitochondrion; sequence MNYSRFLTATSLARKPSPIRTTADILSKA. Arg20 serves as a coordination point for substrate. A Phosphoserine modification is found at Ser40. Lys69 carries the post-translational modification N6-acetyllysine. Residue Tyr74 coordinates substrate. Lys172 bears the N6-succinyllysine mark. Lys179 is modified (N6-acetyllysine). Asn202 provides a ligand contact to substrate. Residue Lys263 is modified to N6-(pyridoxal phosphate)lysine; alternate. N6-acetyllysine; alternate occurs at positions 263 and 339. N6-succinyllysine; alternate occurs at positions 263 and 339. Position 351 is an N6-acetyllysine (Lys351). An N6-acetyllysine; alternate modification is found at Lys367. Lys367 carries the N6-succinyllysine; alternate modification. Arg399 serves as a coordination point for substrate. N6-acetyllysine is present on Lys422.

Belongs to the class-I pyridoxal-phosphate-dependent aminotransferase family. In terms of assembly, homodimer. The cofactor is pyridoxal 5'-phosphate. As to expression, expressed mainly in kidney and to a lesser amount in liver and brain.

The protein localises to the mitochondrion. It catalyses the reaction L-kynurenine + 2-oxoglutarate = kynurenate + L-glutamate + H2O. The catalysed reaction is L-2-aminoadipate + 2-oxoglutarate = 2-oxoadipate + L-glutamate. It carries out the reaction glycine + 2-oxoglutarate = glyoxylate + L-glutamate. The enzyme catalyses L-kynurenine + glyoxylate = kynurenate + glycine + H2O. It catalyses the reaction 3-hydroxy-L-kynurenine + glyoxylate = xanthurenate + glycine + H2O. The catalysed reaction is 2-oxohexanoate + L-kynurenine = L-2-aminohexanoate + kynurenate + H2O. It carries out the reaction 3-phenylpyruvate + L-kynurenine = kynurenate + L-phenylalanine + H2O. The enzyme catalyses 4-methylsulfanyl-2-oxobutanoate + L-kynurenine = kynurenate + L-methionine + H2O. It catalyses the reaction 2-oxo-3-sulfanylpropanoate + L-kynurenine = kynurenate + L-cysteine + H2O. The catalysed reaction is indole-3-pyruvate + L-kynurenine = kynurenate + L-tryptophan + H2O. It carries out the reaction 2-oxopentanoate + L-kynurenine = L-2-aminopentanoate + kynurenate + H2O. The enzyme catalyses 4-methyl-2-oxopentanoate + L-kynurenine = kynurenate + L-leucine + H2O. It catalyses the reaction glyoxylate + L-methionine = 4-methylsulfanyl-2-oxobutanoate + glycine. The catalysed reaction is L-2-aminoadipate + glyoxylate = 2-oxoadipate + glycine. It carries out the reaction L-tyrosine + glyoxylate = 3-(4-hydroxyphenyl)pyruvate + glycine. The enzyme catalyses glyoxylate + L-phenylalanine = 3-phenylpyruvate + glycine. It catalyses the reaction L-tryptophan + glyoxylate = indole-3-pyruvate + glycine. The catalysed reaction is L-leucine + glyoxylate = 4-methyl-2-oxopentanoate + glycine. It carries out the reaction 2-oxobutanoate + L-kynurenine = (2S)-2-aminobutanoate + kynurenate + H2O. The enzyme catalyses 2-oxoadipate + L-kynurenine = L-2-aminoadipate + kynurenate + H2O. It participates in amino-acid degradation; L-lysine degradation via saccharopine pathway; glutaryl-CoA from L-lysine: step 4/6. Transaminase with broad substrate specificity. Has transaminase activity towards aminoadipate, kynurenine, methionine and glutamate. Shows activity also towards tryptophan, aspartate and hydroxykynurenine. Accepts a variety of oxo-acids as amino-group acceptors, with a preference for 2-oxoglutarate, 2-oxocaproic acid, phenylpyruvate and alpha-oxo-gamma-methiol butyric acid. Can also use glyoxylate as amino-group acceptor (in vitro). This is Kynurenine/alpha-aminoadipate aminotransferase, mitochondrial from Mus musculus (Mouse).